The chain runs to 79 residues: CDC42 small effector protein 1 (79 aa).

2 S-palmitoyl cysteine lipidation sites follow: Cys-10 and Cys-11. In terms of domain architecture, CRIB spans 30–43 (IGEPMNFVHLTHIG). Positions 48–79 (GAGDGLAMTGAVQEQMRSKGNRDRPWSNSRGL) are disordered. The segment covering 63 to 72 (MRSKGNRDRP) has biased composition (basic and acidic residues).

It belongs to the CDC42SE/SPEC family. Interacts with CDC42 (in GTP-bound form). Interacts weakly with RAC1 and not at all with RHOA.

It is found in the cytoplasm. Its subcellular location is the cytoskeleton. The protein resides in the cell membrane. In terms of biological role, probably involved in the organization of the actin cytoskeleton by acting downstream of CDC42, inducing actin filament assembly. Alters CDC42-induced cell shape changes. In activated T-cells, may play a role in CDC42-mediated F-actin accumulation at the immunological synapse. May play a role in early contractile events in phagocytosis in macrophages. This chain is CDC42 small effector protein 1 (CDC42SE1), found in Pongo abelii (Sumatran orangutan).